The chain runs to 158 residues: Small ribosomal subunit protein uS19 (158 aa).

Belongs to the universal ribosomal protein uS19 family.

Functionally, protein S19 forms a complex with S13 that binds strongly to the 16S ribosomal RNA. The chain is Small ribosomal subunit protein uS19 from Pyrobaculum neutrophilum (strain DSM 2338 / JCM 9278 / NBRC 100436 / V24Sta) (Thermoproteus neutrophilus).